We begin with the raw amino-acid sequence, 209 residues long: Large ribosomal subunit protein uL4 (209 aa).

Positions 50–89 (MTKTKGLVSGGGKKPFKQKGTGGARQGSSRSILMPGGGTA) are disordered.

The protein belongs to the universal ribosomal protein uL4 family. Part of the 50S ribosomal subunit.

Functionally, one of the primary rRNA binding proteins, this protein initially binds near the 5'-end of the 23S rRNA. It is important during the early stages of 50S assembly. It makes multiple contacts with different domains of the 23S rRNA in the assembled 50S subunit and ribosome. Forms part of the polypeptide exit tunnel. In Bdellovibrio bacteriovorus (strain ATCC 15356 / DSM 50701 / NCIMB 9529 / HD100), this protein is Large ribosomal subunit protein uL4.